A 427-amino-acid chain; its full sequence is Tegument protein VP16 homolog (427 aa).

This sequence belongs to the herpesviridae tegument protein VP16 protein family.

The protein localises to the virion tegument. It is found in the host nucleus. Functionally, transcriptional activator of immediate-early (IE) gene products (alpha genes). Acts as a key activator of lytic infection by initiating the lytic program through the assembly of the transcriptional regulatory VP16-induced complex composed of VP16 and two cellular factors, HCFC1 and POU2F1. VP16-induced complex represents a regulatory switch: when it is on, it promotes IE-gene expression and thus lytic infection, and when it is off, it limits IE-gene transcription favoring latent infection. Its function is as follows. May play a role in the aggregation of tegument proteins around nucleocapsids during virus morphogenesis. This Gallus gallus (Chicken) protein is Tegument protein VP16 homolog (MDV061).